The following is a 115-amino-acid chain: U3-lycotoxin-Ls1i (115 aa).

The N-terminal stretch at 1–20 (MKFVLLFGVFLVTLFSYSSA) is a signal peptide. Residues 21–44 (EMLDDFDQADEDELLSLIEKEEAR) constitute a propeptide that is removed on maturation. Disulfide bonds link C48–C63, C55–C72, C62–C87, and C74–C85.

It belongs to the neurotoxin 19 (CSTX) family. 01 subfamily. Expressed by the venom gland.

It localises to the secreted. This is U3-lycotoxin-Ls1i from Lycosa singoriensis (Wolf spider).